Consider the following 277-residue polypeptide: Undecaprenyl-diphosphatase (277 aa).

A run of 6 helical transmembrane segments spans residues 47-67 (FNII…RGKI), 85-105 (ANLL…ADLI), 108-128 (WLFN…VMLW), 183-203 (AATE…AVYS), 218-238 (VFAV…RALL), and 249-269 (FAWY…FHLI).

It belongs to the UppP family.

The protein localises to the cell inner membrane. The enzyme catalyses di-trans,octa-cis-undecaprenyl diphosphate + H2O = di-trans,octa-cis-undecaprenyl phosphate + phosphate + H(+). Its function is as follows. Catalyzes the dephosphorylation of undecaprenyl diphosphate (UPP). Confers resistance to bacitracin. The sequence is that of Undecaprenyl-diphosphatase from Pseudomonas aeruginosa (strain UCBPP-PA14).